The primary structure comprises 132 residues: Fatty acid-binding protein, brain (132 aa).

Residue Val-2 is modified to N-acetylvaline. 127 to 129 (RHY) provides a ligand contact to a fatty acid.

This sequence belongs to the calycin superfamily. Fatty-acid binding protein (FABP) family. Expressed in brain and other neural tissues.

Its subcellular location is the cytoplasm. Its function is as follows. B-FABP could be involved in the transport of a so far unknown hydrophobic ligand with potential morphogenic activity during CNS development. It is required for the establishment of the radial glial fiber system in developing brain, a system that is necessary for the migration of immature neurons to establish cortical layers. The chain is Fatty acid-binding protein, brain (FABP7) from Homo sapiens (Human).